A 177-amino-acid chain; its full sequence is Large ribosomal subunit protein uL10 (177 aa).

The protein belongs to the universal ribosomal protein uL10 family. Part of the ribosomal stalk of the 50S ribosomal subunit. The N-terminus interacts with L11 and the large rRNA to form the base of the stalk. The C-terminus forms an elongated spine to which L12 dimers bind in a sequential fashion forming a multimeric L10(L12)X complex.

Forms part of the ribosomal stalk, playing a central role in the interaction of the ribosome with GTP-bound translation factors. The sequence is that of Large ribosomal subunit protein uL10 from Xanthomonas oryzae pv. oryzae (strain MAFF 311018).